We begin with the raw amino-acid sequence, 160 residues long: Cytochrome b6-f complex subunit 4 (160 aa).

The next 3 membrane-spanning stretches (helical) occupy residues 36–56 (LLYV…GLAV), 95–115 (LLGI…PFIE), and 131–151 (AVFL…TFPI).

It belongs to the cytochrome b family. PetD subfamily. As to quaternary structure, the 4 large subunits of the cytochrome b6-f complex are cytochrome b6, subunit IV (17 kDa polypeptide, PetD), cytochrome f and the Rieske protein, while the 4 small subunits are PetG, PetL, PetM and PetN. The complex functions as a dimer.

It is found in the cellular thylakoid membrane. Component of the cytochrome b6-f complex, which mediates electron transfer between photosystem II (PSII) and photosystem I (PSI), cyclic electron flow around PSI, and state transitions. This Crocosphaera subtropica (strain ATCC 51142 / BH68) (Cyanothece sp. (strain ATCC 51142)) protein is Cytochrome b6-f complex subunit 4.